A 465-amino-acid polypeptide reads, in one-letter code: Iron-sulfur cluster assembly SufBD family protein SAR0880 (465 aa).

Belongs to the iron-sulfur cluster assembly SufBD family.

This is Iron-sulfur cluster assembly SufBD family protein SAR0880 from Staphylococcus aureus (strain MRSA252).